The chain runs to 897 residues: Chromodomain-helicase-DNA-binding protein 1-like (897 aa).

Arg9 carries the omega-N-methylarginine modification. The 166-residue stretch at 58–223 (AQRFHCQNGC…YSLLSFVEPD (166 aa)) folds into the Helicase ATP-binding domain. 71-78 (DEMGLGKT) contacts ATP. The short motif at 174–177 (DEAH) is the DEAH box element. The Helicase C-terminal domain occupies 351-513 (LLDKLLAFLY…QKPAADADLQ (163 aa)). A phosphoserine mark is found at Ser540, Ser607, Ser618, Ser628, and Ser636. The regulatory linker segment (RLS) stretch occupies residues 601-635 (TLLEKASQEGRSLRNKGSVLIPGLVEGSTKRKRVL). Residues 615-673 (NKGSVLIPGLVEGSTKRKRVLSPEELEDRQKKRQEAAAKRRRLIEEKKRQKEEAEHKKK) are required for ATPase activity. Disordered stretches follow at residues 628 to 654 (STKR…AAKR) and 687 to 711 (LPSE…DYQD). Positions 638 to 675 (EELEDRQKKRQEAAAKRRRLIEEKKRQKEEAEHKKKMA) form a coiled coil. The segment covering 642–654 (DRQKKRQEAAAKR) has biased composition (basic and acidic residues). Residues 690–711 (EESEPEDLENGEESSAELDYQD) are compositionally biased toward acidic residues. The 194-residue stretch at 704-897 (SAELDYQDPD…SSSSSRQLVP (194 aa)) folds into the Macro domain. At Ser891 the chain carries Phosphoserine.

This sequence belongs to the SNF2/RAD54 helicase family. Interacts with nucleosomes; interacts with the acidic patch of histones. Interacts (via macro domain) with PARP1; interacts only when PARP1 is poly-ADP-ribosylated (PARylated). Interacts with CIAO1. As to expression, frequently overexpressed in hepatomacellular carcinomas.

The protein localises to the nucleus. Its subcellular location is the chromosome. It carries out the reaction ATP + H2O = ADP + phosphate + H(+). With respect to regulation, adopts an inactive conformation in absence of DNA damage. Binding to poly-ADP-ribosylated histones activates the ATP-dependent chromatin remodeler activity. ATP-dependent chromatin remodeler that mediates chromatin-remodeling following DNA damage. Recruited to DNA damage sites through interaction with poly-ADP-ribose: specifically recognizes and binds histones that are poly-ADP-ribosylated on serine residues in response to DNA damage. Poly-ADP-ribose-binding activates the ATP-dependent chromatin remodeler activity, thereby regulating chromatin during DNA repair. Catalyzes nucleosome sliding away from DNA breaks in an ATP-dependent manner. Chromatin remodeling activity promotes PARP2 removal from chromatin. This is Chromodomain-helicase-DNA-binding protein 1-like from Homo sapiens (Human).